Consider the following 195-residue polypeptide: U8 snoRNA-decapping enzyme (195 aa).

Positions 18-173 (DWRHACHALL…IGAAREQLLE (156 aa)) constitute a Nudix hydrolase domain. Substrate contacts are provided by His24, Arg50, and Phe57. The Mn(2+) site is built by Gly59, Glu76, Glu80, and His99. The Nudix box signature appears at 61 to 82 (FVDAQDSCLEDGLNRELREELG). Substrate is bound at residue Gln170. Residue Glu173 participates in Mn(2+) binding.

Belongs to the Nudix hydrolase family. NUDT16 subfamily. Homodimer. The cofactor is Mg(2+). It depends on Mn(2+) as a cofactor. Requires Co(2+) as cofactor. As to expression, expressed in brain, testis, spleen, lung, heart, liver, kidney and muscle (at protein level).

Its subcellular location is the nucleus. The protein resides in the nucleolus. It localises to the nucleoplasm. The protein localises to the cytoplasm. The catalysed reaction is a 5'-end (N(7)-methyl 5'-triphosphoguanosine)-ribonucleoside in mRNA + H2O = N(7)-methyl-GDP + a 5'-end phospho-ribonucleoside in mRNA + 2 H(+). It catalyses the reaction IDP + H2O = IMP + phosphate + H(+). It carries out the reaction dIDP + H2O = dIMP + phosphate + H(+). The enzyme catalyses a 5'-end NAD(+)-phospho-ribonucleoside in mRNA + H2O = a 5'-end phospho-ribonucleoside in mRNA + NAD(+) + H(+). The catalysed reaction is a 5'-end FAD-phospho-ribonucleoside in mRNA + H2O = a 5'-end phospho-adenosine-phospho-ribonucleoside in mRNA + FMN + 2 H(+). It catalyses the reaction a 5'-end CoA-ribonucleoside in mRNA + H2O = a 5'-end phospho-adenosine-phospho-ribonucleoside in mRNA + (R)-4'-phosphopantetheine + 2 H(+). Its function is as follows. RNA-binding and decapping enzyme that catalyzes the cleavage of the cap structure of snoRNAs and mRNAs in a metal-dependent manner. Part of the U8 snoRNP complex that is required for the accumulation of mature 5.8S and 28S rRNA. Has diphosphatase activity and removes m7G and/or m227G caps from U8 snoRNA and leaves a 5'monophosphate on the RNA. Also catalyzes the cleavage of the cap structure on mRNAs. Does not hydrolyze cap analog structures like 7-methylguanosine nucleoside triphosphate (m7GpppG). Also hydrolysis m7G- and m227G U3-capped RNAs but with less efficiencies. Has broad substrate specificity with manganese or cobalt as cofactor and can act on various RNA species. Binds to the U8 snoRNA; metal is not required for RNA-binding. May play a role in the regulation of snoRNAs and mRNAs degradation. Also acts as a phosphatase; hydrolyzes the non-canonical purine nucleotides inosine diphosphate (IDP) and deoxyinosine diphosphate (dITP) as well as guanosine diphosphate (GDP), deoxyguanosine diphosphate (dGDP), xanthine diphosphate (XDP), inosine triphosphate (ITP) and deoxyinosine triphosphate (ITP) to their respective monophosphate derivatives and does not distinguish between the deoxy- and ribose forms. The order of activity with different substrates is IDP &gt; dIDP &gt;&gt; GDP = dGDP &gt; XDP = ITP = dITP. Binds strongly to GTP, ITP and XTP. Participates in the hydrolysis of dIDP/IDP and probably excludes non-canonical purines from RNA and DNA precursor pools, thus preventing their incorporation into RNA and DNA and avoiding chromosomal lesions. Exhibits decapping activity towards NAD-capped RNAs and FAD-capped RNAs. Exhibits decapping activity towards dpCoA-capped RNAs in vitro. This is U8 snoRNA-decapping enzyme (Nudt16) from Mus musculus (Mouse).